Consider the following 319-residue polypeptide: Ferrochelatase (319 aa).

Positions 192 and 271 each coordinate Fe cation.

It belongs to the ferrochelatase family.

The protein resides in the cytoplasm. It carries out the reaction heme b + 2 H(+) = protoporphyrin IX + Fe(2+). It participates in porphyrin-containing compound metabolism; protoheme biosynthesis; protoheme from protoporphyrin-IX: step 1/1. Catalyzes the ferrous insertion into protoporphyrin IX. The chain is Ferrochelatase from Geotalea uraniireducens (strain Rf4) (Geobacter uraniireducens).